A 187-amino-acid polypeptide reads, in one-letter code: Ribosome-recycling factor (187 aa).

The protein belongs to the RRF family.

The protein resides in the cytoplasm. In terms of biological role, responsible for the release of ribosomes from messenger RNA at the termination of protein biosynthesis. May increase the efficiency of translation by recycling ribosomes from one round of translation to another. This is Ribosome-recycling factor from Parabacteroides distasonis (strain ATCC 8503 / DSM 20701 / CIP 104284 / JCM 5825 / NCTC 11152).